A 262-amino-acid chain; its full sequence is MLKMRLLLTWVLLVLPLVNALKCANNRVLRKYHIDKHSAKKSVARDTPPSKTTEKWYVNPCEEHPADDIYDGCDKSDDICGIVMVDLPVFNKDPFVIKRIEATDMASFTATEESNALVLRYTGISWGQNMVAANIRYFCDKNSNEDEITSSIWANNDISIIIKGPSGCKKDSSELEDGDVEESSGLSWFTWLFIYAIFFTVVYLVVTSYTQTRGGSIDDFRHDFVERAKQFFTSLPAFVREVVSKVLGSAPNAAERGGYSAV.

A signal peptide spans methionine 1–alanine 20. The region spanning leucine 21 to lysine 170 is the MRH domain. Residues leucine 21 to glycine 185 are Lumenal-facing. 3 cysteine pairs are disulfide-bonded: cysteine 23–cysteine 61, cysteine 73–cysteine 80, and cysteine 139–cysteine 168. Residues leucine 186 to valine 206 traverse the membrane as a helical segment. The Cytoplasmic segment spans residues threonine 207–valine 262.

This sequence belongs to the ATG27 family.

It is found in the cytoplasmic vesicle membrane. Its subcellular location is the golgi apparatus membrane. The protein resides in the mitochondrion membrane. Functionally, regulates the cytoplasm to vacuole transport (Cvt) vesicle formation. The sequence is that of Autophagy-related protein 27 (ATG27) from Vanderwaltozyma polyspora (strain ATCC 22028 / DSM 70294 / BCRC 21397 / CBS 2163 / NBRC 10782 / NRRL Y-8283 / UCD 57-17) (Kluyveromyces polysporus).